We begin with the raw amino-acid sequence, 652 residues long: DNA ligase (652 aa).

NAD(+)-binding positions include 29–33 (DAEYD), 78–79 (SL), and glutamate 107. Lysine 109 (N6-AMP-lysine intermediate) is an active-site residue. NAD(+) contacts are provided by arginine 130, glutamate 164, lysine 278, and lysine 302. Zn(2+) contacts are provided by cysteine 395, cysteine 398, cysteine 413, and cysteine 418. One can recognise a BRCT domain in the interval 577-652 (DENAALSGMT…IKDEAWLESL (76 aa)).

Belongs to the NAD-dependent DNA ligase family. LigA subfamily. It depends on Mg(2+) as a cofactor. Mn(2+) serves as cofactor.

It catalyses the reaction NAD(+) + (deoxyribonucleotide)n-3'-hydroxyl + 5'-phospho-(deoxyribonucleotide)m = (deoxyribonucleotide)n+m + AMP + beta-nicotinamide D-nucleotide.. In terms of biological role, DNA ligase that catalyzes the formation of phosphodiester linkages between 5'-phosphoryl and 3'-hydroxyl groups in double-stranded DNA using NAD as a coenzyme and as the energy source for the reaction. It is essential for DNA replication and repair of damaged DNA. The protein is DNA ligase of Streptococcus suis (strain 98HAH33).